A 227-amino-acid polypeptide reads, in one-letter code: Cytochrome c oxidase subunit 2 (227 aa).

Topologically, residues 1-14 (MAYPLQLGFQDATS) are mitochondrial intermembrane. The chain crosses the membrane as a helical span at residues 15–45 (PIMEELLHFHDHTLMIVFLISSLVLYIISLM). At 46–59 (LTTKLTHTSTMDAQ) the chain is on the mitochondrial matrix side. Residues 60–87 (EVETIWTILPAIILILIALPSLRILYMM) traverse the membrane as a helical segment. Residues 88–227 (DEINNPSLTI…HFEKWSTSML (140 aa)) lie on the Mitochondrial intermembrane side of the membrane. Residues histidine 161, cysteine 196, glutamate 198, cysteine 200, histidine 204, and methionine 207 each coordinate Cu cation. Mg(2+) is bound at residue glutamate 198.

The protein belongs to the cytochrome c oxidase subunit 2 family. As to quaternary structure, component of the cytochrome c oxidase (complex IV, CIV), a multisubunit enzyme composed of 14 subunits. The complex is composed of a catalytic core of 3 subunits MT-CO1, MT-CO2 and MT-CO3, encoded in the mitochondrial DNA, and 11 supernumerary subunits COX4I, COX5A, COX5B, COX6A, COX6B, COX6C, COX7A, COX7B, COX7C, COX8 and NDUFA4, which are encoded in the nuclear genome. The complex exists as a monomer or a dimer and forms supercomplexes (SCs) in the inner mitochondrial membrane with NADH-ubiquinone oxidoreductase (complex I, CI) and ubiquinol-cytochrome c oxidoreductase (cytochrome b-c1 complex, complex III, CIII), resulting in different assemblies (supercomplex SCI(1)III(2)IV(1) and megacomplex MCI(2)III(2)IV(2)). Found in a complex with TMEM177, COA6, COX18, COX20, SCO1 and SCO2. Interacts with TMEM177 in a COX20-dependent manner. Interacts with COX20. Interacts with COX16. Requires Cu cation as cofactor.

It is found in the mitochondrion inner membrane. It carries out the reaction 4 Fe(II)-[cytochrome c] + O2 + 8 H(+)(in) = 4 Fe(III)-[cytochrome c] + 2 H2O + 4 H(+)(out). In terms of biological role, component of the cytochrome c oxidase, the last enzyme in the mitochondrial electron transport chain which drives oxidative phosphorylation. The respiratory chain contains 3 multisubunit complexes succinate dehydrogenase (complex II, CII), ubiquinol-cytochrome c oxidoreductase (cytochrome b-c1 complex, complex III, CIII) and cytochrome c oxidase (complex IV, CIV), that cooperate to transfer electrons derived from NADH and succinate to molecular oxygen, creating an electrochemical gradient over the inner membrane that drives transmembrane transport and the ATP synthase. Cytochrome c oxidase is the component of the respiratory chain that catalyzes the reduction of oxygen to water. Electrons originating from reduced cytochrome c in the intermembrane space (IMS) are transferred via the dinuclear copper A center (CU(A)) of subunit 2 and heme A of subunit 1 to the active site in subunit 1, a binuclear center (BNC) formed by heme A3 and copper B (CU(B)). The BNC reduces molecular oxygen to 2 water molecules using 4 electrons from cytochrome c in the IMS and 4 protons from the mitochondrial matrix. The protein is Cytochrome c oxidase subunit 2 (MT-CO2) of Rhinoceros unicornis (Greater Indian rhinoceros).